The following is a 278-amino-acid chain: Transcription initiation factor TFIID subunit 9 (278 aa).

Residues 193-278 (TTTKTVGSSG…EEEEFEFVTN (86 aa)) form a disordered region. Over residues 200 to 210 (SSGGSGGGGGQ) the composition is skewed to gly residues. Residues 231–240 (AAAVGSIAGA) show a composition bias toward low complexity. The segment covering 241-259 (SGSGAGSASGGGGGGGSSG) has biased composition (gly residues). Over residues 269–278 (EEEEFEFVTN) the composition is skewed to acidic residues.

This sequence belongs to the TAF9 family. In terms of assembly, belongs to the TFIID complex which is composed of TATA binding protein (Tbp) and a number of TBP-associated factors (TAFs). Taf9 and Taf6 exist as a heterotetramer. Interacts with e(y)2.

It localises to the nucleus. Functionally, TFIID is a multimeric protein complex that plays a central role in mediating promoter responses to various activators and repressors. The polypeptide is Transcription initiation factor TFIID subunit 9 (Drosophila melanogaster (Fruit fly)).